A 231-amino-acid chain; its full sequence is Cysteine-rich venom protein VAR10 (231 aa).

Residues 1–19 (MILLKLYLTLAAILCQSRG) form the signal peptide. Residues 41–169 (NKHNDLRRTV…SLKYFQVCQY (129 aa)) enclose the SCP domain. 5 cysteine pairs are disulfide-bonded: cysteine 77–cysteine 156, cysteine 95–cysteine 170, cysteine 151–cysteine 167, cysteine 189–cysteine 196, and cysteine 214–cysteine 231. Residues 205–231 (CAYNDDYTSCPDLTKQVGCHHPVTANC) form the ShKT domain.

It belongs to the CRISP family. Post-translationally, contains 8 disulfide bonds. In terms of tissue distribution, expressed by the venom gland.

The protein localises to the secreted. Blocks ryanodine receptors, and potassium channels. This chain is Cysteine-rich venom protein VAR10, found in Varanus varius (Lace monitor lizard).